The chain runs to 431 residues: 5-methylthioadenosine/S-adenosylhomocysteine deaminase (431 aa).

Zn(2+) is bound by residues histidine 66 and histidine 68. Substrate contacts are provided by glutamate 95, arginine 147, and histidine 185. Histidine 212 lines the Zn(2+) pocket. Substrate contacts are provided by glutamate 215 and aspartate 300. A Zn(2+)-binding site is contributed by aspartate 300.

This sequence belongs to the metallo-dependent hydrolases superfamily. MTA/SAH deaminase family. Requires Zn(2+) as cofactor.

It carries out the reaction S-adenosyl-L-homocysteine + H2O + H(+) = S-inosyl-L-homocysteine + NH4(+). It catalyses the reaction S-methyl-5'-thioadenosine + H2O + H(+) = S-methyl-5'-thioinosine + NH4(+). Catalyzes the deamination of 5-methylthioadenosine and S-adenosyl-L-homocysteine into 5-methylthioinosine and S-inosyl-L-homocysteine, respectively. Is also able to deaminate adenosine. This Acetivibrio thermocellus (strain ATCC 27405 / DSM 1237 / JCM 9322 / NBRC 103400 / NCIMB 10682 / NRRL B-4536 / VPI 7372) (Clostridium thermocellum) protein is 5-methylthioadenosine/S-adenosylhomocysteine deaminase.